A 192-amino-acid chain; its full sequence is Large ribosomal subunit protein uL5 (192 aa).

The protein belongs to the universal ribosomal protein uL5 family. In terms of assembly, part of the 50S ribosomal subunit; contacts the 5S rRNA and probably tRNA. Forms a bridge to the 30S subunit in the 70S ribosome.

In terms of biological role, this is one of the proteins that bind and probably mediate the attachment of the 5S RNA into the large ribosomal subunit, where it forms part of the central protuberance. In the 70S ribosome it contacts protein S13 of the 30S subunit (bridge B1b), connecting the 2 subunits; this bridge is implicated in subunit movement. May contact the P site tRNA; the 5S rRNA and some of its associated proteins might help stabilize positioning of ribosome-bound tRNAs. The chain is Large ribosomal subunit protein uL5 from Aeropyrum pernix (strain ATCC 700893 / DSM 11879 / JCM 9820 / NBRC 100138 / K1).